Consider the following 999-residue polypeptide: Lysosomal alpha-mannosidase (999 aa).

The interval 1-25 (MVGDARPSGVRAGGCRGAVGSRTSS) is disordered. The N-terminal stretch at 1–50 (MVGDARPSGVRAGGCRGAVGSRTSSRALRPPLPPLSSLFVLFLAAPCAWA) is a signal peptide. Residues His73 and Asp75 each coordinate Zn(2+). N-linked (GlcNAc...) asparagine glycosylation is present at Asn134. Asp197 provides a ligand contact to Zn(2+). The active-site Nucleophile is Asp197. Residues Cys269 and Cys274 are joined by a disulfide bond. A glycan (N-linked (GlcNAc...) asparagine) is linked at Asn369. His448 contacts Zn(2+). A disulfide bridge connects residues Cys495 and Cys503. An N-linked (GlcNAc...) asparagine glycan is attached at Asn499. Positions 591–621 (SRDLVIQNEYLRARFDPNTGLLMELENLEQN) are excised as a propeptide. 5 N-linked (GlcNAc...) asparagine glycosylation sites follow: Asn634, Asn640, Asn681, Asn755, and Asn919.

Belongs to the glycosyl hydrolase 38 family. Homodimer. Requires Zn(2+) as cofactor. Processed into 5 peptides of 35/38 kDa (A), 11/13 kDa (B) and 22 kDa (C), 38 kDa (D) and 13/15 kDa (E). The A, B and C peptides are disulfide-linked into a 67 kDa complex. In terms of processing, heavily glycosylated. Some sugar chains are of the high-mannose type.

It is found in the lysosome. The catalysed reaction is Hydrolysis of terminal, non-reducing alpha-D-mannose residues in alpha-D-mannosides.. Necessary for the catabolism of N-linked carbohydrates released during glycoprotein turnover. The chain is Lysosomal alpha-mannosidase (MAN2B1) from Bos taurus (Bovine).